The primary structure comprises 976 residues: Apical junction component 1 homolog (976 aa).

Residues A21–H49 are disordered. S52 is subject to Phosphoserine. Disordered stretches follow at residues G61–Y136, P220–S242, and Y264–F294. Over residues R98–L113 the composition is skewed to pro residues. Residues R116–P134 are compositionally biased toward basic and acidic residues. S129 is subject to Phosphoserine. Omega-N-methylarginine is present on R322. Residues L412–R443 are disordered. Phosphoserine occurs at positions 468, 509, and 512. Disordered stretches follow at residues D539 to Q574 and L614 to D660. Composition is skewed to low complexity over residues S616 to A625 and P633 to P655. Position 749 is an asymmetric dimethylarginine; alternate (R749). At R749 the chain carries Omega-N-methylarginine; alternate. The segment at G855–G888 is disordered.

It localises to the apical cell membrane. It is found in the cell projection. The protein localises to the cilium. The protein resides in the cell junction. Its subcellular location is the adherens junction. Its function is as follows. May be involved in the control of adherens junction integrity. In Homo sapiens (Human), this protein is Apical junction component 1 homolog.